Consider the following 295-residue polypeptide: GTPase Era (295 aa).

Positions 4–171 (KSGFVTIIGR…INLIVQYLPE (168 aa)) constitute an Era-type G domain. The segment at 12-19 (GRPNVGKS) is G1. GTP is bound at residue 12 to 19 (GRPNVGKS). The segment at 38–42 (QTTRN) is G2. The interval 59 to 62 (DTPG) is G3. Residues 59–63 (DTPGI) and 121–124 (NKID) each bind GTP. Residues 121–124 (NKID) form a G4 region. The G5 stretch occupies residues 150 to 152 (ISA). In terms of domain architecture, KH type-2 spans 194-280 (IREKILHYTD…YLELWVKVKE (87 aa)).

It belongs to the TRAFAC class TrmE-Era-EngA-EngB-Septin-like GTPase superfamily. Era GTPase family. Monomer.

It localises to the cytoplasm. The protein localises to the cell membrane. An essential GTPase that binds both GDP and GTP, with rapid nucleotide exchange. Plays a role in 16S rRNA processing and 30S ribosomal subunit biogenesis and possibly also in cell cycle regulation and energy metabolism. The polypeptide is GTPase Era (Alkaliphilus oremlandii (strain OhILAs) (Clostridium oremlandii (strain OhILAs))).